The sequence spans 161 residues: RNA pyrophosphohydrolase (161 aa).

The Nudix hydrolase domain occupies Lys-7–Glu-149. The Nudix box motif lies at Gly-40 to Gly-61.

It belongs to the Nudix hydrolase family. RppH subfamily. A divalent metal cation serves as cofactor.

Functionally, accelerates the degradation of transcripts by removing pyrophosphate from the 5'-end of triphosphorylated RNA, leading to a more labile monophosphorylated state that can stimulate subsequent ribonuclease cleavage. This chain is RNA pyrophosphohydrolase, found in Wolbachia sp. subsp. Brugia malayi (strain TRS).